The sequence spans 82 residues: Three-finger toxin MicTx3 (82 aa).

The signal sequence occupies residues 1-21 (MKTLLLTLVVVTIMCLDLGYT). 4 cysteine pairs are disulfide-bonded: C24–C44, C38–C59, C63–C74, and C75–C80.

The protein belongs to the three-finger toxin family. Short-chain subfamily. As to expression, expressed by the venom gland.

The protein resides in the secreted. Its function is as follows. Has been described to inhibit nicotinic acetylcholine receptor (nAChR) alpha-7/CHRNA7 subunits and to bind acetylcholine binding protein (AChBP) (Kd=29.5 nM). This is Three-finger toxin MicTx3 from Micrurus corallinus (Brazilian coral snake).